Reading from the N-terminus, the 312-residue chain is Retinol dehydrogenase 8 (312 aa).

9 to 18 (LISGCSSGIG) is an NADP(+) binding site. Transmembrane regions (helical) follow at residues 87–107 (VLVN…SLAA), 138–158 (IVVV…VYAA), and 170–190 (LAVQ…GPVV). Position 143 (Ser-143) interacts with substrate. The active-site Proton acceptor is the Tyr-156.

Belongs to the short-chain dehydrogenases/reductases (SDR) family. Detected in photoreceptor outer segments in the retina (at protein level).

The protein localises to the membrane. The catalysed reaction is all-trans-retinol + NADP(+) = all-trans-retinal + NADPH + H(+). In terms of biological role, retinol dehydrogenase with a clear preference for NADP. Converts all-trans-retinal to all-trans-retinol. May play a role in the regeneration of visual pigment at high light intensity. This chain is Retinol dehydrogenase 8 (RDH8), found in Bos taurus (Bovine).